The following is a 546-amino-acid chain: Chaperonin GroEL (546 aa).

Residues 29 to 32, K50, 86 to 90, G414, 477 to 479, and D493 contribute to the ATP site; these read TLGP, DGTTT, and NAL.

The protein belongs to the chaperonin (HSP60) family. Forms a cylinder of 14 subunits composed of two heptameric rings stacked back-to-back. Interacts with the co-chaperonin GroES.

The protein resides in the cytoplasm. The catalysed reaction is ATP + H2O + a folded polypeptide = ADP + phosphate + an unfolded polypeptide.. Together with its co-chaperonin GroES, plays an essential role in assisting protein folding. The GroEL-GroES system forms a nano-cage that allows encapsulation of the non-native substrate proteins and provides a physical environment optimized to promote and accelerate protein folding. The polypeptide is Chaperonin GroEL (Leptospira interrogans serogroup Icterohaemorrhagiae serovar Lai (strain 56601)).